A 219-amino-acid polypeptide reads, in one-letter code: Octanoyltransferase (219 aa).

Positions 31–206 (TASADEIWLV…ECLRLMKASA (176 aa)) constitute a BPL/LPL catalytic domain. Substrate-binding positions include 70-77 (RGGQVTFH), 137-139 (SLG), and 150-152 (GLA). Residue cysteine 168 is the Acyl-thioester intermediate of the active site.

This sequence belongs to the LipB family.

Its subcellular location is the cytoplasm. It catalyses the reaction octanoyl-[ACP] + L-lysyl-[protein] = N(6)-octanoyl-L-lysyl-[protein] + holo-[ACP] + H(+). Its pathway is protein modification; protein lipoylation via endogenous pathway; protein N(6)-(lipoyl)lysine from octanoyl-[acyl-carrier-protein]: step 1/2. Its function is as follows. Catalyzes the transfer of endogenously produced octanoic acid from octanoyl-acyl-carrier-protein onto the lipoyl domains of lipoate-dependent enzymes. Lipoyl-ACP can also act as a substrate although octanoyl-ACP is likely to be the physiological substrate. This is Octanoyltransferase from Sodalis glossinidius (strain morsitans).